Here is a 386-residue protein sequence, read N- to C-terminus: MTRTVLVLNSGSSSVKYAVLEPDSGVLIADGIVERIGQEGGAHDHAAAMRGVFDSLAADGHHLEDLGLVAVGHRVVHGGPDLYRPTIVDETVIDRLKELGPLAPLHNPPAVLGIEVARDALPDLPHVAVFDTAFFHDLPAAAATYAIDAEVARDWNIRRYGFHGTSHQYVSEQAAAFLDVPLESLSQIVLHLGNGASVSAIVGGRPVETSMGLTPMEGLVMGTRSGDVDPGVIFYLWREAGMPVEDIESMLNRRSGVRGLGGEIDFRELHRRIESGDDAAELAYEVYIHRLRKYIGAYLAILGSADVITFTAGVGENDAVVRRDALTGLAAFGIEIDEHLNDSPGRGARRISADGAPTTVLVIPTDEELAIARACTGVLGARPGDG.

Asn9 serves as a coordination point for Mg(2+). Residue Lys16 coordinates ATP. Arg74 provides a ligand contact to substrate. Asp131 functions as the Proton donor/acceptor in the catalytic mechanism. Residues 191–195, 265–267, and 313–317 contribute to the ATP site; these read HLGNG, DFR, and GVGEN. Residue Glu367 participates in Mg(2+) binding.

The protein belongs to the acetokinase family. Homodimer. Mg(2+) is required as a cofactor. Requires Mn(2+) as cofactor.

It is found in the cytoplasm. The enzyme catalyses acetate + ATP = acetyl phosphate + ADP. It functions in the pathway metabolic intermediate biosynthesis; acetyl-CoA biosynthesis; acetyl-CoA from acetate: step 1/2. Catalyzes the formation of acetyl phosphate from acetate and ATP. Can also catalyze the reverse reaction. This chain is Acetate kinase, found in Mycolicibacterium gilvum (strain PYR-GCK) (Mycobacterium gilvum (strain PYR-GCK)).